A 599-amino-acid chain; its full sequence is Elongation factor 4 (599 aa).

In terms of domain architecture, tr-type G spans 2–184 (KNIRNFSIIA…RLVRDIPPPE (183 aa)). GTP-binding positions include 14–19 (DHGKST) and 131–134 (NKID).

This sequence belongs to the TRAFAC class translation factor GTPase superfamily. Classic translation factor GTPase family. LepA subfamily.

It is found in the cell inner membrane. The enzyme catalyses GTP + H2O = GDP + phosphate + H(+). Its function is as follows. Required for accurate and efficient protein synthesis under certain stress conditions. May act as a fidelity factor of the translation reaction, by catalyzing a one-codon backward translocation of tRNAs on improperly translocated ribosomes. Back-translocation proceeds from a post-translocation (POST) complex to a pre-translocation (PRE) complex, thus giving elongation factor G a second chance to translocate the tRNAs correctly. Binds to ribosomes in a GTP-dependent manner. The sequence is that of Elongation factor 4 from Klebsiella pneumoniae (strain 342).